Here is a 311-residue protein sequence, read N- to C-terminus: Mycinamicin-resistance protein MyrB (311 aa).

Residues asparagine 27, leucine 29, glycine 54, glutamate 75, and aspartate 98 each contribute to the S-adenosyl-L-methionine site. The tract at residues 272–311 (PAPAGRSVRARPGSVGPDRSLPPRGLRSGPPRARRRGGGA) is disordered. Over residues 293 to 302 (PPRGLRSGPP) the composition is skewed to low complexity.

This sequence belongs to the class I-like SAM-binding methyltransferase superfamily. rRNA adenine N(6)-methyltransferase family.

Its function is as follows. Confers resistance to macrolide, lincosamide and streptogramin B antibiotics. This Micromonospora griseorubida protein is Mycinamicin-resistance protein MyrB (myrB).